Here is a 453-residue protein sequence, read N- to C-terminus: Ribulose bisphosphate carboxylase large chain (453 aa).

Residues 1–2 (MS) constitute a propeptide that is removed on maturation. An N-acetylproline modification is found at Pro-3. Position 14 is an N6,N6,N6-trimethyllysine (Lys-14). 2 residues coordinate substrate: Asn-123 and Thr-173. The active-site Proton acceptor is the Lys-175. A substrate-binding site is contributed by Lys-177. 3 residues coordinate Mg(2+): Lys-201, Asp-203, and Glu-204. At Lys-201 the chain carries N6-carboxylysine. His-294 acts as the Proton acceptor in catalysis. Substrate is bound by residues Arg-295, His-327, and Ser-379.

Belongs to the RuBisCO large chain family. Type I subfamily. In terms of assembly, heterohexadecamer of 8 large chains and 8 small chains; disulfide-linked. The disulfide link is formed within the large subunit homodimers. The cofactor is Mg(2+). The disulfide bond which can form in the large chain dimeric partners within the hexadecamer appears to be associated with oxidative stress and protein turnover.

Its subcellular location is the plastid. The protein resides in the chloroplast. It catalyses the reaction 2 (2R)-3-phosphoglycerate + 2 H(+) = D-ribulose 1,5-bisphosphate + CO2 + H2O. The catalysed reaction is D-ribulose 1,5-bisphosphate + O2 = 2-phosphoglycolate + (2R)-3-phosphoglycerate + 2 H(+). Functionally, ruBisCO catalyzes two reactions: the carboxylation of D-ribulose 1,5-bisphosphate, the primary event in carbon dioxide fixation, as well as the oxidative fragmentation of the pentose substrate in the photorespiration process. Both reactions occur simultaneously and in competition at the same active site. In Galium lucidum, this protein is Ribulose bisphosphate carboxylase large chain.